Reading from the N-terminus, the 186-residue chain is Large ribosomal subunit protein uL5 (186 aa).

This sequence belongs to the universal ribosomal protein uL5 family. Part of the 50S ribosomal subunit; part of the 5S rRNA/L5/L18/L25 subcomplex. Contacts the 5S rRNA and the P site tRNA. Forms a bridge to the 30S subunit in the 70S ribosome.

Its function is as follows. This is one of the proteins that bind and probably mediate the attachment of the 5S RNA into the large ribosomal subunit, where it forms part of the central protuberance. In the 70S ribosome it contacts protein S13 of the 30S subunit (bridge B1b), connecting the 2 subunits; this bridge is implicated in subunit movement. Contacts the P site tRNA; the 5S rRNA and some of its associated proteins might help stabilize positioning of ribosome-bound tRNAs. The polypeptide is Large ribosomal subunit protein uL5 (Karelsulcia muelleri (strain GWSS) (Sulcia muelleri)).